The sequence spans 447 residues: Chordin-like protein 1 (447 aa).

An N-terminal signal peptide occupies residues 1–22; that stretch reads MEGIKYIASLVFFFVFLEASKT. 2 consecutive VWFC domains span residues 30–95 and 108–174; these read TYCM…PRCP and KSCE…RVCR. A glycan (N-linked (GlcNAc...) asparagine) is linked at asparagine 113. Residues 174-176 carry the Cell attachment site motif; that stretch reads RGD. The segment at 199–219 is disordered; the sequence is HSYLRSPYDPPPSRQAGGLPR. The VWFC 3 domain maps to 253 to 318; the sequence is QVCVSNGKTY…LDGKCCKVCP (66 aa). N-linked (GlcNAc...) asparagine glycosylation occurs at asparagine 286.

It is found in the secreted. Its function is as follows. Seems to antagonize the function of BMP4 by binding to it and preventing its interaction with receptors. Alters the fate commitment of neural stem cells from gliogenesis to neurogenesis. Contributes to neuronal differentiation of neural stem cells in the brain by preventing the adoption of a glial fate. May play a crucial role in dorsoventral axis formation. May play a role in embryonic bone formation. Plays a role during anterior segment eye development. This Rattus norvegicus (Rat) protein is Chordin-like protein 1 (Chrdl1).